An 895-amino-acid polypeptide reads, in one-letter code: Zinc finger protein 281 (895 aa).

Disordered stretches follow at residues Met-1 to Pro-44 and Phe-63 to Ser-113. Lys-2 is covalently cross-linked (Glycyl lysine isopeptide (Lys-Gly) (interchain with G-Cter in SUMO2)). Gly residues predominate over residues Phe-7–Ser-36. Glycyl lysine isopeptide (Lys-Gly) (interchain with G-Cter in SUMO2) cross-links involve residues Arg-65, Lys-101, and Lys-128. Composition is skewed to basic and acidic residues over residues Glu-130–Ser-140 and Arg-202–Val-218. 2 disordered regions span residues Glu-130 to Tyr-149 and His-183 to Ile-253. Residues Lys-213, Lys-219, Lys-225, Lys-232, Lys-242, and Lys-259 each participate in a glycyl lysine isopeptide (Lys-Gly) (interchain with G-Cter in SUMO2) cross-link. 3 C2H2-type zinc fingers span residues His-261 to His-283, Phe-289 to His-311, and Phe-317 to His-339. Residues Lys-301 and Lys-325 each participate in a glycyl lysine isopeptide (Lys-Gly) (interchain with G-Cter in SUMO2) cross-link. Residues Tyr-345–Cys-367 form a C2H2-type 4; atypical zinc finger. Lys-373 is covalently cross-linked (Glycyl lysine isopeptide (Lys-Gly) (interchain with G-Cter in SUMO2)). The disordered stretch occupies residues Ser-377–Gln-427. Over residues Glu-379–Asn-398 the composition is skewed to polar residues. Ser-395 carries the phosphoserine modification. Residues Lys-409, Lys-416, Lys-460, and Lys-477 each participate in a glycyl lysine isopeptide (Lys-Gly) (interchain with G-Cter in SUMO2) cross-link. At Ser-484 the chain carries Phosphoserine. Glycyl lysine isopeptide (Lys-Gly) (interchain with G-Cter in SUMO2) cross-links involve residues Lys-493, Lys-498, Lys-539, Lys-599, Lys-617, and Lys-622. Positions Ser-638–Asp-660 are disordered. A compositionally biased stretch (polar residues) spans Glu-648–Asp-660. Ser-651 carries the post-translational modification Phosphoserine. Glycyl lysine isopeptide (Lys-Gly) (interchain with G-Cter in SUMO2) cross-links involve residues Lys-661 and Lys-670. Residues Ser-778–Thr-789 show a composition bias toward polar residues. Positions Ser-778–Gln-817 are disordered. Position 785 is a phosphoserine (Ser-785). Glycyl lysine isopeptide (Lys-Gly) (interchain with G-Cter in SUMO2) cross-links involve residues Lys-787, Lys-792, and Lys-795. Over residues Leu-797 to Asp-815 the composition is skewed to polar residues. Ser-807 carries the post-translational modification Phosphoserine. Residues Lys-818 and Lys-840 each participate in a glycyl lysine isopeptide (Lys-Gly) (interchain with G-Cter in SUMO2) cross-link. Residue Thr-888 is modified to Phosphothreonine.

This sequence belongs to the krueppel C2H2-type zinc-finger protein family.

It localises to the nucleus. Functionally, transcription repressor that plays a role in regulation of embryonic stem cells (ESCs) differentiation. Required for ESCs differentiation and acts by mediating autorepression of NANOG in ESCs: binds to the NANOG promoter and promotes association of NANOG protein to its own promoter and recruits the NuRD complex, which deacetylates histones. Not required for establishement and maintenance of ESCs. Represses the transcription of a number of genes including GAST, ODC1 and VIM. Binds to the G-rich box in the enhancer region of these genes. The polypeptide is Zinc finger protein 281 (ZNF281) (Homo sapiens (Human)).